A 279-amino-acid chain; its full sequence is Tryptophan 2,3-dioxygenase (279 aa).

Substrate is bound by residues 48 to 52 (FIVIH), Tyr-110, and Arg-114. His-237 is a binding site for heme. Thr-251 provides a ligand contact to substrate.

It belongs to the tryptophan 2,3-dioxygenase family. In terms of assembly, homotetramer. Heme serves as cofactor.

It catalyses the reaction L-tryptophan + O2 = N-formyl-L-kynurenine. It participates in amino-acid degradation; L-tryptophan degradation via kynurenine pathway; L-kynurenine from L-tryptophan: step 1/2. In terms of biological role, heme-dependent dioxygenase that catalyzes the oxidative cleavage of the L-tryptophan (L-Trp) pyrrole ring and converts L-tryptophan to N-formyl-L-kynurenine. Catalyzes the oxidative cleavage of the indole moiety. This Bacillus cereus (strain ATCC 10987 / NRS 248) protein is Tryptophan 2,3-dioxygenase.